We begin with the raw amino-acid sequence, 510 residues long: 1,3-beta-glucanosyltransferase gas5 (510 aa).

Positions 1–22 are cleaved as a signal peptide; that stretch reads MNFLHFLTTSLLLLGGSRLALA. A disulfide bond links C70 and C99. (1,3-beta-D-glucosyl)n is bound at residue Y88. A glycan (N-linked (GlcNAc...) asparagine) is linked at N147. 4 residues coordinate (1,3-beta-D-glucosyl)n: N158, E159, D200, and R205. E159 (proton donor) is an active-site residue. Intrachain disulfides connect C214-C353 and C232-C264. N-linked (GlcNAc...) asparagine glycosylation is found at N216 and N252. The active-site Nucleophile is E261. (1,3-beta-D-glucosyl)n is bound at residue Y300. N-linked (GlcNAc...) asparagine glycans are attached at residues N318, N337, and N397. A disordered region spans residues 424–456; that stretch reads QSSTSGSSSGSSSASTTASSSSVSSGSSISSGS. S485 is lipidated: GPI-anchor amidated serine. The propeptide at 486–510 is removed in mature form; sequence SASTFNLSRFYVFAGILAISGLVFA. N491 carries N-linked (GlcNAc...) asparagine glycosylation.

This sequence belongs to the glycosyl hydrolase 72 family. In terms of processing, the GPI-anchor is attached to the protein in the endoplasmic reticulum and serves to target the protein to the cell surface. There, the glucosamine-inositol phospholipid moiety is cleaved off and the GPI-modified mannoprotein is covalently attached via its lipidless GPI glycan remnant to the 1,6-beta-glucan of the outer cell wall layer.

The protein localises to the secreted. It localises to the cell wall. Its subcellular location is the membrane. Its function is as follows. Splits internally a 1,3-beta-glucan molecule and transfers the newly generated reducing end (the donor) to the non-reducing end of another 1,3-beta-glucan molecule (the acceptor) forming a 1,3-beta linkage, resulting in the elongation of 1,3-beta-glucan chains in the cell wall. The sequence is that of 1,3-beta-glucanosyltransferase gas5 (gas5) from Schizosaccharomyces pombe (strain 972 / ATCC 24843) (Fission yeast).